The sequence spans 420 residues: Na(+)/H(+) antiporter NhaA (420 aa).

The next 11 membrane-spanning stretches (helical) occupy residues 4-24 (VWNFITGYSLLLIGGAIIALI), 70-90 (DLLMALFFAIAAKEVWEAVIL), 104-124 (LVATLGGMVGPISIYLGIAYF), 132-152 (AVANGWAIPTATDIAFSYLVG), 165-185 (FLLLLAIADDAAGLLILAIFY), 192-212 (PAWLLLSFGAALGVYVLANWL), 233-250 (LSFWPYALAGCASWYGFM), 299-319 (VEIILGLFGLMNAGVAFSAMG), 323-343 (WLVLAGLLIGKPVGIFLFGWL), 361-381 (LVVIGCVAAIGFTVSLFVASV), and 395-415 (GALFSFGAAAVSIIVGKLTQV).

Belongs to the NhaA Na(+)/H(+) (TC 2.A.33) antiporter family.

It is found in the cell inner membrane. It carries out the reaction Na(+)(in) + 2 H(+)(out) = Na(+)(out) + 2 H(+)(in). Its function is as follows. Na(+)/H(+) antiporter that extrudes sodium in exchange for external protons. This is Na(+)/H(+) antiporter NhaA from Jannaschia sp. (strain CCS1).